A 2149-amino-acid polypeptide reads, in one-letter code: MNHVTIKQSDTRADPFRVFIFGDQSSCNLSNLQLLLFKKSNVYLASFIDQVNLTLRHEIARLTAAERQSFPAFSSIQNLVARALKKDTSVALESTLATIYHLCCFLNYFGDGQEAYPTGPTTHVSGLCIGALAAAAVSSSKSLAELVQAGIDAVRVSLKVGLLVARTAALFSHQESNGTSSSPWSYAVPDSQLPLALAEEAIESYQAKTNIPPLSLPYISAKGQNSWTVSGPPAIVQHFLETSQFEKTLRLTRLAVHAPYHAPHIFSAIDVQHIIRAVGPVSSFSSKLSFISSSSSRNLPTGLNFQDLLCRAVEDILILPLDLREAAENIRLVLEATDNVQQCALFPISTGVCPSLKQSFSPATASRVSIVDCIMERATADAGPKSTSGPKPSESKIAIIGMSGRFPESADVEAFWDLLHQGLDVHRPVPPDRYNGELYYDVTGKRKNTCKVMHGCWINEPGLFDAKFFNISPKEAEQSDPGQRLALATAYEALEAAGVVADRTPSTQRDRVGVFYGMTSDDYREVSCGQNVDTYFIPGGNRAFTPGKINYFFKYCGPSVSVDTACSSSLAAIHLACNSIWRNECDTAIAGGTNVMSNPDSFVGLDRGYFLSRTGNCHTFDDEADGYCRADAVGTVILKRLEDAIADHDPILGVISGALTNHSADAVSITRPHSGAQEEIFSKLLTESGVHPHQVSYIEMHGTGTQAGDATEMTSVLNCFAPSTSPRRLPHESLHLGSTKANVGHSESASGVSALIKVLLMMEKNIIPPHCGIKGKINHKFPTDLDQRNVHIARTATQWNRRNEFNNIRRAFVNNFSAAGGNTALLVEDYPLLIADSSQQDARTAHVVTVSAKCIKSLKGNLENLKKFVQKQASTQGFLPKLSYTTTARRMHHPFRVAIPAANSEQLLSALDEELKHDGYTCSSESPVAFVFSGQGSQYSAMGQHLLHFTIFRDEVHAYDILARRHGFPSIMPLIDGSVDIEDLEPLVVQLGTVCVQMALASLWMALGMRPAYVVGHSLGHYAALKVAGVLTASDTIYLVAMRARLLQNKCSRGSHAMLAIRSSADEIQAHLDEGIHDIACISGPQDTVVSGCIDDIDRLSQKLTDKGIKATRVNVPFAFHSAQVDPILDELEATASQVEFHAPRVAIGCPLLGKTFKAGETPSLEANHIRRHCRETVNFLDVLRSAKDDGFVSEKTAWIEIGPHTVCSKLVKANISQDIVAVPSLMRNKDGWQVLASSVAALYRHGSSVAWDEYHHDFEACKQVLRLPAYSWDNKVYWIDYVHDWLLTRGDPPVQAAASLPAPPSSFSTASVHRIVHESVDKGKLTLTAECEFTNEQLREVVYGHVVNGNRVCSSSLYTDFGVTLGSYILEKYRPDLQDHAVDVQDMVVNKALVHKEGPTMLLRIDVVLDMTDSKAASMSIYSVNSKGNKTAEHAQSSLHFERPKVWLKSWDSTQYYVERSIEWLKEKADQGLNSRMSSGVIYKLFSSLVDYSTAYKGMQEAIVNTEDFEATALVRFQVDEGNFRCNPMWVDSCGQLAGFLMNGHAKTPKDQVFINHGWQSFRTVRKFSKDKTYRTYVRMRCIEGTTYAGDVYIFDDEGIVGVCGSITFQGIPRKVLNTAMPPPKSQNEAPVRSAPAKPAAKPPKSASSEHSGHFARHSNIEPLKLDAALKSATTARNPMLAVFKIVSEEIGIPSASVDNGLVFADYGVDSLLSLSISGRLREELDLDVESSAFETCATLADLATHLGLDTFSSDQSSGQSSSSGGLSPRSDSIGEITSSATTPPSLSPRGSVSGSQCKDVCAILAEEIGVSMSEITNDTDLGALGMDSLMSLAVLSRLREELELDLEGDFFVSHPNFSSFKHMFQQGHGDEVESEPSAELKQYRATSTLLQGNPKSALYTLFLLPDGSGSSFSYAPINAVRKDVCVFGLNCPWLKSAEKLVQFGLKGLATLYVEEIRRRAPHGPYNLGGWSAGGICAYEAAIQFTREGETVERLILLDSPNPIGLEKLPARLFDFVNGLGLFGDGKAPDWLLAHFLAFIDALDEWKPVPWDKALGGGNSPPPRTYILWAEDGICKDTDARPEYRDDDPREMKWLLENRTNFGGNNWDVLLGQQSLAIERIQDANHFTMLRKGKNSERVAAFIRSTFG.

Residues Phe-19–His-261 form an N-terminal acylcarrier protein transacylase domain (SAT) region. In terms of domain architecture, Ketosynthase family 3 (KS3) spans Glu-394–Asp-829. Active-site for beta-ketoacyl synthase activity residues include Cys-566, His-701, and His-745. Residues Ala-929–Trp-1233 are malonyl-CoA:ACP transacylase (MAT) domain. The active-site For acyl/malonyl transferase activity is Ser-1018. A product template (PT) domain region spans residues Thr-1310–Pro-1624. Positions His-1314 to Val-1447 are N-terminal hotdog fold. Residues His-1314–Asn-1619 enclose the PKS/mFAS DH domain. Catalysis depends on His-1346, which acts as the Proton acceptor; for dehydratase activity. The interval Leu-1474–Asn-1619 is C-terminal hotdog fold. Residue Asp-1533 is the Proton donor; for dehydratase activity of the active site. The tract at residues Asn-1619–Ala-1657 is disordered. Residues Ser-1635 to Ser-1650 are compositionally biased toward low complexity. Residues Arg-1678 to Thr-1752 enclose the Carrier 1 domain. Ser-1712 bears the O-(pantetheine 4'-phosphoryl)serine mark. A compositionally biased stretch (low complexity) spans Ser-1755–Pro-1790. A disordered region spans residues Ser-1755–Gly-1796. Residues Ser-1793–His-1870 enclose the Carrier 2 domain. Ser-1830 bears the O-(pantetheine 4'-phosphoryl)serine mark. The thioesterase (TE) domain stretch occupies residues Leu-1882–Thr-2147. Ser-1973 acts as the For thioesterase activity in catalysis.

Its function is as follows. Polyketide synthase; part of the Pks1 gene cluster that mediates the biosynthesis of an anthraquinone derivative pigment that contributes to conidial pigmentation that provides protection from UV radiation, heat and cold stress. The polyketide synthase Pks1 produces 1-acetyl-2,4,6,8-tetrahydroxy-9,10-anthraquinone though condensation of acetyl-CoA with malonyl-CoA. The dehydratase EthD and the laccase Mlac1 further convert the anthraquinone derivative into the final conidial pigment. The chain is Polyketide synthase 1 from Metarhizium majus (strain ARSEF 297).